A 133-amino-acid polypeptide reads, in one-letter code: Ribosome-binding factor A (133 aa).

It belongs to the RbfA family. In terms of assembly, monomer. Binds 30S ribosomal subunits, but not 50S ribosomal subunits or 70S ribosomes.

The protein localises to the cytoplasm. In terms of biological role, one of several proteins that assist in the late maturation steps of the functional core of the 30S ribosomal subunit. Associates with free 30S ribosomal subunits (but not with 30S subunits that are part of 70S ribosomes or polysomes). Required for efficient processing of 16S rRNA. May interact with the 5'-terminal helix region of 16S rRNA. The chain is Ribosome-binding factor A from Acinetobacter baumannii (strain ACICU).